Consider the following 135-residue polypeptide: Putative pre-16S rRNA nuclease (135 aa).

It belongs to the YqgF nuclease family.

Its subcellular location is the cytoplasm. In terms of biological role, could be a nuclease involved in processing of the 5'-end of pre-16S rRNA. The sequence is that of Putative pre-16S rRNA nuclease from Thermus thermophilus (strain ATCC 27634 / DSM 579 / HB8).